Consider the following 647-residue polypeptide: Probable inactive receptor kinase RLK902 (647 aa).

An N-terminal signal peptide occupies residues 1–29 (MRLFFTPSMSNLSIFFSILLLSLPLPSIG). LRR repeat units lie at residues 69-93 (GGRV…IFGN), 94-118 (LTQL…LGSC), 119-142 (SDLR…LFSL), 144-165 (NLVR…GFKN), and 166-192 (LTRL…SLDQ). A helical membrane pass occupies residues 268–288 (GIVIGCVVGLSLIVMILMVLF). Residues 365-639 (RASAEVLGKG…EVVRRIQELR (275 aa)) enclose the Protein kinase domain. At serine 367 the chain carries Phosphoserine. Residue 371 to 379 (LGKGTFGTA) coordinates ATP. Threonine 388 bears the Phosphothreonine mark. Lysine 393 serves as a coordination point for ATP. Residue serine 444 is modified to Phosphoserine. Threonine 520 carries the post-translational modification Phosphothreonine. Residue serine 540 is modified to Phosphoserine. Residue threonine 618 is modified to Phosphothreonine.

The protein belongs to the protein kinase superfamily. Ser/Thr protein kinase family. As to quaternary structure, interacts with At3g17950, At3g27210 and At5g05190. In terms of processing, autophosphorylation. As to expression, expressed in root tips, lateral root primordia, stipules, and floral organ abscission zones.

It localises to the cell membrane. This Arabidopsis thaliana (Mouse-ear cress) protein is Probable inactive receptor kinase RLK902 (RLK902).